Reading from the N-terminus, the 279-residue chain is Inorganic pyrophosphatase 2 (279 aa).

Asp12 functions as the Nucleophile in the catalytic mechanism. Mg(2+)-binding residues include Asp12 and Asp14. Asp14 functions as the Proton donor in the catalytic mechanism. Residues Asp23 and Asp98 each contribute to the substrate site. A Mg(2+)-binding site is contributed by Asp182.

The protein belongs to the HAD-like hydrolase superfamily. Tetramer. It depends on Mg(2+) as a cofactor.

The enzyme catalyses diphosphate + H2O = 2 phosphate + H(+). In terms of biological role, catalyzes the specific cleavage of pyrophosphate. This Arabidopsis thaliana (Mouse-ear cress) protein is Inorganic pyrophosphatase 2.